The sequence spans 871 residues: Dual O-methyltransferase/FAD-dependent monooxygenase CTB3 (871 aa).

The segment at 1–429 is O-methyltransferase; that stretch reads MMQFQRDLEA…GLLTVRSAGQ (429 aa). Residue Asp-279 participates in S-adenosyl-L-methionine binding. The active-site Proton acceptor is the His-331. Residues 430-871 are FAD-dependent monooxygenase; sequence TALSGTNTLT…NLVDCSEFVF (442 aa). Residues Glu-485, Arg-569, and Ala-806 each contribute to the FAD site.

This sequence in the C-terminal section; belongs to the paxM FAD-dependent monooxygenase family. It in the N-terminal section; belongs to the class I-like SAM-binding methyltransferase superfamily. Cation-independent O-methyltransferase family. COMT subfamily.

The enzyme catalyses nor-toralactone + S-adenosyl-L-methionine = toralactone + S-adenosyl-L-homocysteine + H(+). It catalyses the reaction toralactone + NADH + O2 + H(+) = 1-(3,4,5-trihydroxy-7-methoxynaphthalen-2-yl)propan-2-one + CO2 + NAD(+). Its pathway is mycotoxin biosynthesis. In terms of biological role, dual O-methyltransferase/FAD-dependent monooxygenase; part of the gene cluster that mediates the biosynthesis of cercosporin, a light-activated, non-host-selective toxin. The perylenequinone chromophore of cercosporin absorbs light energy to attain an electronically-activated triplet state and produces active oxygen species such as the hydroxyl radical, superoxide, hydrogen peroxide or singlet oxygen upon reaction with oxygen molecules. These reactive oxygen species cause damage to various cellular components including lipids, proteins and nucleic acids. The first step of cercosporin biosynthesis is performed by the polyketide synthase CTB1 which catalyzes the formation of nor-toralactone. The starter unit acyltransferase (SAT) domain of CTB1 initiates polyketide extension by the selective utilization of acetyl-CoA, which is elongated to the heptaketide in the beta-ketoacyl synthase (KS) domain by successive condensations with six malonyl units introduced by the malonyl acyltransferase (MAT) domain. The product template (PT) domain catalyzes C4-C9 and C2-C11 aldol cyclizations and dehydrations to a trihydroxynaphthalene, which is thought to be delivered to the thioesterase (TE) domain for product release. The bifunctional enzyme CTB3 then methylates nor-toralactone to toralactone before conducting an unusual oxidative aromatic ring opening. The O-methyltransferase CTB2 further methylates the nascent OH-6 of the CBT3 product, blocking further oxidation at this site before the reductase CTB6 reduces the 2-oxopropyl ketone at position C7, giving naphthalene. The FAD-dependent monooxygenase CTB5 in concert with the multicopper oxidase CTB12 are responsible for homodimerization of naphthalene with CTB7 installing the dioxepine moiety, finally producing cercosporin. The fasciclin domain-containing protein CTB11 might act with CTB5 and CTB12 whereas the roles of CTB9 and CTB10 have still to be elucidated. In Cercospora nicotianae (Barn spot disease fungus), this protein is Dual O-methyltransferase/FAD-dependent monooxygenase CTB3.